The following is a 24-amino-acid chain: Cytochrome c oxidase subunit 5A-2, mitochondrial (24 aa).

This sequence belongs to the cytochrome c oxidase subunit 5A family. In terms of assembly, component of the cytochrome c oxidase (complex IV, CIV), a multisubunit enzyme composed of 14 subunits. The complex is composed of a catalytic core of 3 subunits MT-CO1, MT-CO2 and MT-CO3, encoded in the mitochondrial DNA, and 11 supernumerary subunits COX4I, COX5A, COX5B, COX6A, COX6B, COX6C, COX7A, COX7B, COX7C, COX8 and NDUFA4, which are encoded in the nuclear genome. The complex exists as a monomer or a dimer and forms supercomplexes (SCs) in the inner mitochondrial membrane with NADH-ubiquinone oxidoreductase (complex I, CI) and ubiquinol-cytochrome c oxidoreductase (cytochrome b-c1 complex, complex III, CIII), resulting in different assemblies (supercomplex SCI(1)III(2)IV(1) and megacomplex MCI(2)III(2)IV(2)).

The protein resides in the mitochondrion inner membrane. It participates in energy metabolism; oxidative phosphorylation. In terms of biological role, component of the cytochrome c oxidase, the last enzyme in the mitochondrial electron transport chain which drives oxidative phosphorylation. The respiratory chain contains 3 multisubunit complexes succinate dehydrogenase (complex II, CII), ubiquinol-cytochrome c oxidoreductase (cytochrome b-c1 complex, complex III, CIII) and cytochrome c oxidase (complex IV, CIV), that cooperate to transfer electrons derived from NADH and succinate to molecular oxygen, creating an electrochemical gradient over the inner membrane that drives transmembrane transport and the ATP synthase. Cytochrome c oxidase is the component of the respiratory chain that catalyzes the reduction of oxygen to water. Electrons originating from reduced cytochrome c in the intermembrane space (IMS) are transferred via the dinuclear copper A center (CU(A)) of subunit 2 and heme A of subunit 1 to the active site in subunit 1, a binuclear center (BNC) formed by heme A3 and copper B (CU(B)). The BNC reduces molecular oxygen to 2 water molecules using 4 electrons from cytochrome c in the IMS and 4 protons from the mitochondrial matrix. The polypeptide is Cytochrome c oxidase subunit 5A-2, mitochondrial (Thunnus obesus (Bigeye tuna)).